The primary structure comprises 177 residues: Dual-action ribosomal maturation protein DarP (177 aa).

Residues 1-26 (MKIVGDSEHFKQPYDSDEEYVSKTED) are disordered.

The protein belongs to the DarP family.

It localises to the cytoplasm. Its function is as follows. Member of a network of 50S ribosomal subunit biogenesis factors which assembles along the 30S-50S interface, preventing incorrect 23S rRNA structures from forming. Promotes peptidyl transferase center (PTC) maturation. This Shewanella sp. (strain MR-4) protein is Dual-action ribosomal maturation protein DarP.